Reading from the N-terminus, the 433-residue chain is Myricetin 3-O-glucosyl 1,2-rhamnoside 6'-O-caffeoyltransferase AT1 (433 aa).

Catalysis depends on proton acceptor residues H157 and D375.

It belongs to the plant acyltransferase family. In terms of tissue distribution, expressed in young cromes.

It carries out the reaction myricetin 3-O-[beta-D-glucosyl-(1-&gt;2)-alpha-L-rhamnoside] + (E)-caffeoyl-CoA = myricetin 3-O-[(6-O-(E)-caffeoyl-beta-D-glucosyl)-(1-&gt;2)-alpha-L-rhamnoside] + CoA. Its pathway is flavonoid metabolism. Its function is as follows. Caffeoyltransferase involved in montbretin A (MbA) biosynthesis. Catalyzes the caffeoylation of myricetin 3-O-beta-D-glucosyl 1,2-alpha-L-rhamnoside (MRG) to produce myricetin 3-O-(6'-O-caffeoyl)-beta-D-glucosyl 1,2-alpha-L-rhamnoside (mini-MbA), a precursor of MbA. Mini-MbA and MbA are potent inhibitors of human pancreatic alpha-amylase and are being developed as drug candidates to treat type-2 diabetes. In vitro, is able to catalyze the caffeoylation of quercetin 3-O-sophoroside (QGG), although QGG may not be a physiological substrate in vivo. In vitro, can use coumaryl-CoA, feruloyl-CoA and acetyl-CoA, although these three acyl donors may not be physiological in vivo. The protein is Myricetin 3-O-glucosyl 1,2-rhamnoside 6'-O-caffeoyltransferase AT1 of Crocosmia x crocosmiiflora (Montbretia).